The following is a 96-amino-acid chain: UPF0235 protein YggU (96 aa).

Belongs to the UPF0235 family.

The sequence is that of UPF0235 protein YggU from Shigella flexneri.